Reading from the N-terminus, the 102-residue chain is Large ribosomal subunit protein uL24 (102 aa).

It belongs to the universal ribosomal protein uL24 family. In terms of assembly, part of the 50S ribosomal subunit.

One of two assembly initiator proteins, it binds directly to the 5'-end of the 23S rRNA, where it nucleates assembly of the 50S subunit. Its function is as follows. One of the proteins that surrounds the polypeptide exit tunnel on the outside of the subunit. In Leuconostoc mesenteroides subsp. mesenteroides (strain ATCC 8293 / DSM 20343 / BCRC 11652 / CCM 1803 / JCM 6124 / NCDO 523 / NBRC 100496 / NCIMB 8023 / NCTC 12954 / NRRL B-1118 / 37Y), this protein is Large ribosomal subunit protein uL24.